Reading from the N-terminus, the 498-residue chain is Lysine--tRNA ligase (498 aa).

Mg(2+) contacts are provided by E401 and E408.

It belongs to the class-II aminoacyl-tRNA synthetase family. As to quaternary structure, homodimer. The cofactor is Mg(2+).

The protein localises to the cytoplasm. The catalysed reaction is tRNA(Lys) + L-lysine + ATP = L-lysyl-tRNA(Lys) + AMP + diphosphate. The chain is Lysine--tRNA ligase from Dehalococcoides mccartyi (strain ATCC BAA-2266 / KCTC 15142 / 195) (Dehalococcoides ethenogenes (strain 195)).